We begin with the raw amino-acid sequence, 391 residues long: 23S rRNA (uracil(747)-C(5))-methyltransferase RlmC (391 aa).

4 residues coordinate [4Fe-4S] cluster: Cys-5, Cys-13, Cys-16, and Cys-95. S-adenosyl-L-methionine is bound by residues Gln-220, Phe-249, Glu-276, and Asn-322. Cys-349 (nucleophile) is an active-site residue.

The protein belongs to the class I-like SAM-binding methyltransferase superfamily. RNA M5U methyltransferase family. RlmC subfamily.

The catalysed reaction is uridine(747) in 23S rRNA + S-adenosyl-L-methionine = 5-methyluridine(747) in 23S rRNA + S-adenosyl-L-homocysteine + H(+). Its function is as follows. Catalyzes the formation of 5-methyl-uridine at position 747 (m5U747) in 23S rRNA. In Actinobacillus pleuropneumoniae serotype 3 (strain JL03), this protein is 23S rRNA (uracil(747)-C(5))-methyltransferase RlmC.